The primary structure comprises 196 residues: Probable inactive nicotinamidase At3g16190 (196 aa).

Belongs to the isochorismatase family.

Functionally, does not possess nicotinamidase activity in vitro. This is Probable inactive nicotinamidase At3g16190 from Arabidopsis thaliana (Mouse-ear cress).